The chain runs to 69 residues: Cytochrome c oxidase subunit 8A, mitochondrial (69 aa).

The transit peptide at M1–K25 directs the protein to the mitochondrion. Residues V26 to G36 are Mitochondrial matrix-facing. Residues I37–S60 traverse the membrane as a helical segment. The Mitochondrial intermembrane segment spans residues H61 to E69.

Belongs to the cytochrome c oxidase VIII family. As to quaternary structure, component of the cytochrome c oxidase (complex IV, CIV), a multisubunit enzyme composed of 14 subunits. The complex is composed of a catalytic core of 3 subunits MT-CO1, MT-CO2 and MT-CO3, encoded in the mitochondrial DNA, and 11 supernumerary subunits COX4I, COX5A, COX5B, COX6A, COX6B, COX6C, COX7A, COX7B, COX7C, COX8 and NDUFA4, which are encoded in the nuclear genome. The complex exists as a monomer or a dimer and forms supercomplexes (SCs) in the inner mitochondrial membrane with NADH-ubiquinone oxidoreductase (complex I, CI) and ubiquinol-cytochrome c oxidoreductase (cytochrome b-c1 complex, complex III, CIII), resulting in different assemblies (supercomplex SCI(1)III(2)IV(1) and megacomplex MCI(2)III(2)IV(2)). In response to mitochondrial stress, the precursor protein is ubiquitinated by the SIFI complex in the cytoplasm before mitochondrial import, leading to its degradation. Within the SIFI complex, UBR4 initiates ubiquitin chain that are further elongated or branched by KCMF1.

The protein localises to the mitochondrion inner membrane. The protein operates within energy metabolism; oxidative phosphorylation. In terms of biological role, component of the cytochrome c oxidase, the last enzyme in the mitochondrial electron transport chain which drives oxidative phosphorylation. The respiratory chain contains 3 multisubunit complexes succinate dehydrogenase (complex II, CII), ubiquinol-cytochrome c oxidoreductase (cytochrome b-c1 complex, complex III, CIII) and cytochrome c oxidase (complex IV, CIV), that cooperate to transfer electrons derived from NADH and succinate to molecular oxygen, creating an electrochemical gradient over the inner membrane that drives transmembrane transport and the ATP synthase. Cytochrome c oxidase is the component of the respiratory chain that catalyzes the reduction of oxygen to water. Electrons originating from reduced cytochrome c in the intermembrane space (IMS) are transferred via the dinuclear copper A center (CU(A)) of subunit 2 and heme A of subunit 1 to the active site in subunit 1, a binuclear center (BNC) formed by heme A3 and copper B (CU(B)). The BNC reduces molecular oxygen to 2 water molecules using 4 electrons from cytochrome c in the IMS and 4 protons from the mitochondrial matrix. This chain is Cytochrome c oxidase subunit 8A, mitochondrial (COX8A), found in Macaca fascicularis (Crab-eating macaque).